The following is a 227-amino-acid chain: Cytochrome c oxidase subunit 2 (227 aa).

Topologically, residues 1-14 (MAYPMQLGFQDATS) are mitochondrial intermembrane. The chain crosses the membrane as a helical span at residues 15-45 (PIMEELLHFHDHTLMIVFLISSLVLYVISLM). Residues 46-59 (LTTKLTHTSTMDAQ) lie on the Mitochondrial matrix side of the membrane. A helical transmembrane segment spans residues 60–87 (EVETIWTILPAIILILIALPSLRILYMM). Residues 88–227 (DEINNPSLTV…YFEKWSASML (140 aa)) are Mitochondrial intermembrane-facing. Residues H161, C196, E198, C200, H204, and M207 each coordinate Cu cation. E198 contributes to the Mg(2+) binding site.

The protein belongs to the cytochrome c oxidase subunit 2 family. As to quaternary structure, component of the cytochrome c oxidase (complex IV, CIV), a multisubunit enzyme composed of 14 subunits. The complex is composed of a catalytic core of 3 subunits MT-CO1, MT-CO2 and MT-CO3, encoded in the mitochondrial DNA, and 11 supernumerary subunits COX4I, COX5A, COX5B, COX6A, COX6B, COX6C, COX7A, COX7B, COX7C, COX8 and NDUFA4, which are encoded in the nuclear genome. The complex exists as a monomer or a dimer and forms supercomplexes (SCs) in the inner mitochondrial membrane with NADH-ubiquinone oxidoreductase (complex I, CI) and ubiquinol-cytochrome c oxidoreductase (cytochrome b-c1 complex, complex III, CIII), resulting in different assemblies (supercomplex SCI(1)III(2)IV(1) and megacomplex MCI(2)III(2)IV(2)). Found in a complex with TMEM177, COA6, COX18, COX20, SCO1 and SCO2. Interacts with TMEM177 in a COX20-dependent manner. Interacts with COX20. Interacts with COX16. The cofactor is Cu cation.

The protein resides in the mitochondrion inner membrane. It carries out the reaction 4 Fe(II)-[cytochrome c] + O2 + 8 H(+)(in) = 4 Fe(III)-[cytochrome c] + 2 H2O + 4 H(+)(out). Its function is as follows. Component of the cytochrome c oxidase, the last enzyme in the mitochondrial electron transport chain which drives oxidative phosphorylation. The respiratory chain contains 3 multisubunit complexes succinate dehydrogenase (complex II, CII), ubiquinol-cytochrome c oxidoreductase (cytochrome b-c1 complex, complex III, CIII) and cytochrome c oxidase (complex IV, CIV), that cooperate to transfer electrons derived from NADH and succinate to molecular oxygen, creating an electrochemical gradient over the inner membrane that drives transmembrane transport and the ATP synthase. Cytochrome c oxidase is the component of the respiratory chain that catalyzes the reduction of oxygen to water. Electrons originating from reduced cytochrome c in the intermembrane space (IMS) are transferred via the dinuclear copper A center (CU(A)) of subunit 2 and heme A of subunit 1 to the active site in subunit 1, a binuclear center (BNC) formed by heme A3 and copper B (CU(B)). The BNC reduces molecular oxygen to 2 water molecules using 4 electrons from cytochrome c in the IMS and 4 protons from the mitochondrial matrix. The protein is Cytochrome c oxidase subunit 2 (MT-CO2) of Gazella spekei (Speke's gazelle).